Here is a 132-residue protein sequence, read N- to C-terminus: Translation initiation factor 2 subunit beta (132 aa).

The tract at residues 1–30 (MDYEEQLDRAMDEKPDVTGSETRFEVPDPN) is disordered.

This sequence belongs to the eIF-2-beta/eIF-5 family. Heterotrimer composed of an alpha, a beta and a gamma chain.

EIF-2 functions in the early steps of protein synthesis by forming a ternary complex with GTP and initiator tRNA. This is Translation initiation factor 2 subunit beta from Halobacterium salinarum (strain ATCC 29341 / DSM 671 / R1).